The chain runs to 124 residues: Immunoglobulin lambda variable 5-52 (124 aa).

An N-terminal signal peptide occupies residues 1–19 (MAWTLLLLVLLSHCTGSLS). The framework-1 stretch occupies residues 20–44 (QPVLTQPSSHSASSGASVRLTCMLS). The region spanning 21–124 (PVLTQPSSHS…CGTWHSNSKT (104 aa)) is the Ig-like domain. Cysteine 41 and cysteine 115 are disulfide-bonded. Residues 45 to 53 (SGFSVGDFW) are complementarity-determining-1. The tract at residues 54 to 70 (IRWYQQKPGNPPRYLLY) is framework-2. Residues 71–77 (YHSDSNK) form a complementarity-determining-2 region. Positions 78–115 (GQGSGVPSRFSGSNDASANAGILRISGLQPEDEADYYC) are framework-3. Residues 116-124 (GTWHSNSKT) are complementarity-determining-3.

As to quaternary structure, immunoglobulins are composed of two identical heavy chains and two identical light chains; disulfide-linked.

It localises to the secreted. Its subcellular location is the cell membrane. Its function is as follows. V region of the variable domain of immunoglobulin light chains that participates in the antigen recognition. Immunoglobulins, also known as antibodies, are membrane-bound or secreted glycoproteins produced by B lymphocytes. In the recognition phase of humoral immunity, the membrane-bound immunoglobulins serve as receptors which, upon binding of a specific antigen, trigger the clonal expansion and differentiation of B lymphocytes into immunoglobulins-secreting plasma cells. Secreted immunoglobulins mediate the effector phase of humoral immunity, which results in the elimination of bound antigens. The antigen binding site is formed by the variable domain of one heavy chain, together with that of its associated light chain. Thus, each immunoglobulin has two antigen binding sites with remarkable affinity for a particular antigen. The variable domains are assembled by a process called V-(D)-J rearrangement and can then be subjected to somatic hypermutations which, after exposure to antigen and selection, allow affinity maturation for a particular antigen. This chain is Immunoglobulin lambda variable 5-52, found in Homo sapiens (Human).